A 2293-amino-acid polypeptide reads, in one-letter code: Protein Ycf2 (2293 aa).

An ATP-binding site is contributed by G1642–S1649.

This sequence belongs to the Ycf2 family.

It is found in the plastid. It localises to the chloroplast stroma. Functionally, probable ATPase of unknown function. Its presence in a non-photosynthetic plant (Epifagus virginiana) and experiments in tobacco indicate that it has an essential function which is probably not related to photosynthesis. This chain is Protein Ycf2, found in Platanus occidentalis (Sycamore).